Here is a 161-residue protein sequence, read N- to C-terminus: 2-C-methyl-D-erythritol 2,4-cyclodiphosphate synthase (161 aa).

Residues D9 and H11 each contribute to the a divalent metal cation site. 4-CDP-2-C-methyl-D-erythritol 2-phosphate contacts are provided by residues 9-11 (DFH) and 37-38 (HS). Residue H45 participates in a divalent metal cation binding. 4-CDP-2-C-methyl-D-erythritol 2-phosphate is bound by residues 59–61 (DIG), 64–68 (FPDTD), 135–138 (TTTE), and R145.

This sequence belongs to the IspF family. Homotrimer. It depends on a divalent metal cation as a cofactor.

It catalyses the reaction 4-CDP-2-C-methyl-D-erythritol 2-phosphate = 2-C-methyl-D-erythritol 2,4-cyclic diphosphate + CMP. Its pathway is isoprenoid biosynthesis; isopentenyl diphosphate biosynthesis via DXP pathway; isopentenyl diphosphate from 1-deoxy-D-xylulose 5-phosphate: step 4/6. Involved in the biosynthesis of isopentenyl diphosphate (IPP) and dimethylallyl diphosphate (DMAPP), two major building blocks of isoprenoid compounds. Catalyzes the conversion of 4-diphosphocytidyl-2-C-methyl-D-erythritol 2-phosphate (CDP-ME2P) to 2-C-methyl-D-erythritol 2,4-cyclodiphosphate (ME-CPP) with a corresponding release of cytidine 5-monophosphate (CMP). This chain is 2-C-methyl-D-erythritol 2,4-cyclodiphosphate synthase, found in Leptospira interrogans serogroup Icterohaemorrhagiae serovar copenhageni (strain Fiocruz L1-130).